We begin with the raw amino-acid sequence, 529 residues long: Bifunctional purine biosynthesis protein PurH (529 aa).

Residues 1 to 148 enclose the MGS-like domain; the sequence is MNNARPIRRA…KNHKDTTIIV (148 aa).

This sequence belongs to the PurH family.

The enzyme catalyses (6R)-10-formyltetrahydrofolate + 5-amino-1-(5-phospho-beta-D-ribosyl)imidazole-4-carboxamide = 5-formamido-1-(5-phospho-D-ribosyl)imidazole-4-carboxamide + (6S)-5,6,7,8-tetrahydrofolate. The catalysed reaction is IMP + H2O = 5-formamido-1-(5-phospho-D-ribosyl)imidazole-4-carboxamide. Its pathway is purine metabolism; IMP biosynthesis via de novo pathway; 5-formamido-1-(5-phospho-D-ribosyl)imidazole-4-carboxamide from 5-amino-1-(5-phospho-D-ribosyl)imidazole-4-carboxamide (10-formyl THF route): step 1/1. It functions in the pathway purine metabolism; IMP biosynthesis via de novo pathway; IMP from 5-formamido-1-(5-phospho-D-ribosyl)imidazole-4-carboxamide: step 1/1. This Shewanella halifaxensis (strain HAW-EB4) protein is Bifunctional purine biosynthesis protein PurH.